We begin with the raw amino-acid sequence, 161 residues long: Cytochrome c-type biogenesis protein CcmE (161 aa).

Topologically, residues 1-8 (MNARRKKR) are cytoplasmic. The helical; Signal-anchor for type II membrane protein transmembrane segment at 9 to 29 (LALATALIGGVAAIASLLLYA) threads the bilayer. Residues 30-161 (LNSNLNLFYT…EYDSTQKTGY (132 aa)) are Periplasmic-facing. Heme is bound by residues His131 and Tyr135.

The protein belongs to the CcmE/CycJ family.

It is found in the cell inner membrane. Its function is as follows. Heme chaperone required for the biogenesis of c-type cytochromes. Transiently binds heme delivered by CcmC and transfers the heme to apo-cytochromes in a process facilitated by CcmF and CcmH. In Shewanella loihica (strain ATCC BAA-1088 / PV-4), this protein is Cytochrome c-type biogenesis protein CcmE.